Reading from the N-terminus, the 315-residue chain is Homoserine kinase (315 aa).

An ATP-binding site is contributed by 97–107; sequence PPARGLGSSAT.

This sequence belongs to the GHMP kinase family. Homoserine kinase subfamily.

It localises to the cytoplasm. It carries out the reaction L-homoserine + ATP = O-phospho-L-homoserine + ADP + H(+). Its pathway is amino-acid biosynthesis; L-threonine biosynthesis; L-threonine from L-aspartate: step 4/5. In terms of biological role, catalyzes the ATP-dependent phosphorylation of L-homoserine to L-homoserine phosphate. The sequence is that of Homoserine kinase from Synechococcus sp. (strain CC9605).